The chain runs to 147 residues: 2-amino-4-hydroxy-6-hydroxymethyldihydropteridine pyrophosphokinase (147 aa).

It belongs to the HPPK family.

It catalyses the reaction 6-hydroxymethyl-7,8-dihydropterin + ATP = (7,8-dihydropterin-6-yl)methyl diphosphate + AMP + H(+). It functions in the pathway cofactor biosynthesis; tetrahydrofolate biosynthesis; 2-amino-4-hydroxy-6-hydroxymethyl-7,8-dihydropteridine diphosphate from 7,8-dihydroneopterin triphosphate: step 4/4. Catalyzes the transfer of pyrophosphate from adenosine triphosphate (ATP) to 6-hydroxymethyl-7,8-dihydropterin, an enzymatic step in folate biosynthesis pathway. This is 2-amino-4-hydroxy-6-hydroxymethyldihydropteridine pyrophosphokinase (folK) from Porphyromonas gingivalis (strain ATCC 33277 / DSM 20709 / CIP 103683 / JCM 12257 / NCTC 11834 / 2561).